The following is a 130-amino-acid chain: Small ribosomal subunit protein uS11 (130 aa).

This sequence belongs to the universal ribosomal protein uS11 family. Part of the 30S ribosomal subunit. Interacts with proteins S7 and S18. Binds to IF-3.

Its function is as follows. Located on the platform of the 30S subunit, it bridges several disparate RNA helices of the 16S rRNA. Forms part of the Shine-Dalgarno cleft in the 70S ribosome. The protein is Small ribosomal subunit protein uS11 of Campylobacter curvus (strain 525.92).